We begin with the raw amino-acid sequence, 332 residues long: Putative pumilio homolog 20 (332 aa).

A PUM-HD domain is found at 1-332; that stretch reads MAHQLRFAAA…NIASILNSIR (332 aa). Pumilio repeat units lie at residues 89–124 and 125–159; these read SDPD…FAAA and ILRR…AMYE. A Pumilio 3; degenerate repeat occupies 160–191; the sequence is HILHYASHIARDKHGNLALNDIITDAYRNKLF. Pumilio repeat units follow at residues 192-228, 229-266, and 267-303; these read DVIA…NIVV, SLRG…ELME, and CEGD…DLFW.

It is found in the cytoplasm. Its function is as follows. Sequence-specific RNA-binding protein that regulates translation and mRNA stability by binding the 3'-UTR of target mRNAs. The chain is Putative pumilio homolog 20 (APUM20) from Arabidopsis thaliana (Mouse-ear cress).